The primary structure comprises 204 residues: Pre-mRNA leakage protein 1 (204 aa).

An FHA domain is found at 104-172; sequence YLVGRELGHS…NGTCLNNVVI (69 aa).

As to quaternary structure, belongs to the pre-mRNA retention and splicing (RES) complex composed of at least BUD13, IST3 and PML1.

It is found in the cytoplasm. The protein localises to the nucleus. Its function is as follows. Required for efficient splicing and pre-mRNA nuclear retention. The sequence is that of Pre-mRNA leakage protein 1 (PML1) from Saccharomyces cerevisiae (strain ATCC 204508 / S288c) (Baker's yeast).